The following is a 115-amino-acid chain: C-type natriuretic peptide prohormone (115 aa).

The tract at residues 24-49 (PSDELNNEAEEMSPAASLPELNADQS) is disordered. A disulfide bridge links cysteine 99 with cysteine 115.

The protein belongs to the natriuretic peptide family. CNP-115 is differentially processed to produce CNP-38 and CNP-39 in the heart and CNP-22 in the brain.

The protein resides in the secreted. In terms of biological role, hormone which may be vasoactive and natriuretic. Has a cGMP-stimulating activity. The protein is C-type natriuretic peptide prohormone of Scyliorhinus canicula (Small-spotted catshark).